The following is a 169-amino-acid chain: S-ribosylhomocysteine lyase (169 aa).

Fe cation is bound by residues His-54, His-58, and Cys-128.

It belongs to the LuxS family. As to quaternary structure, homodimer. It depends on Fe cation as a cofactor.

The catalysed reaction is S-(5-deoxy-D-ribos-5-yl)-L-homocysteine = (S)-4,5-dihydroxypentane-2,3-dione + L-homocysteine. Functionally, involved in the synthesis of autoinducer 2 (AI-2) which is secreted by bacteria and is used to communicate both the cell density and the metabolic potential of the environment. The regulation of gene expression in response to changes in cell density is called quorum sensing. Catalyzes the transformation of S-ribosylhomocysteine (RHC) to homocysteine (HC) and 4,5-dihydroxy-2,3-pentadione (DPD). The protein is S-ribosylhomocysteine lyase of Sulfurovum sp. (strain NBC37-1).